The primary structure comprises 244 residues: Carboxy-S-adenosyl-L-methionine synthase (244 aa).

S-adenosyl-L-methionine is bound by residues Tyr-41, 66 to 68, 91 to 92, 119 to 120, Asn-134, and Arg-201; these read GCS, DN, and DI.

The protein belongs to the class I-like SAM-binding methyltransferase superfamily. Cx-SAM synthase family. In terms of assembly, homodimer.

It catalyses the reaction prephenate + S-adenosyl-L-methionine = carboxy-S-adenosyl-L-methionine + 3-phenylpyruvate + H2O. Catalyzes the conversion of S-adenosyl-L-methionine (SAM) to carboxy-S-adenosyl-L-methionine (Cx-SAM). The polypeptide is Carboxy-S-adenosyl-L-methionine synthase (Photobacterium profundum (strain SS9)).